A 616-amino-acid chain; its full sequence is Chaperone protein HscA (616 aa).

The protein belongs to the heat shock protein 70 family.

Functionally, chaperone involved in the maturation of iron-sulfur cluster-containing proteins. Has a low intrinsic ATPase activity which is markedly stimulated by HscB. Involved in the maturation of IscU. The polypeptide is Chaperone protein HscA (Escherichia coli O17:K52:H18 (strain UMN026 / ExPEC)).